Reading from the N-terminus, the 441-residue chain is MREIVHIQAGQCGNQIGSKFWEVISDEHGIDPSGQYVGDSDLQLERINVYYNEAGSNKYVPRAVLVDLEPGTMDSVRSGPFGQLFRPDNYVFGQSGAGNNWAKGHYTEGAELVDNVLDVVRKEAESTDCLQGFQLTHSLGGGTGSGMGTLLISKIREEYPDRIMNTFSVVPSPKVSDTVVEPYNATLSVHQLVENTDSTFCIDNEALYDICFRTLKLTTPTYGDLNHLVSATMSGVTTCLRFPGQLNADLRKLAVNMVPFPRLHFFMPGFAPLTSRSNQQYRAITVPELTQQCFDAKNMMAACDPRHGRYLTAAAIFRGRMSMKEVDEQMLNIQNKNSSYFVDWIPNNVKTAVCDIPPRGLKMSATFIGNSTAIQELFKRISEQFTAMFRRKAFLHWYTGEGMDEMEFTEAESNMNDLVSEYQQYQEAAADEDAAEAFDGE.

The GTP site is built by Gln-11, Glu-69, Ser-138, Gly-142, Thr-143, Gly-144, Asn-204, and Asn-226. Glu-69 is a binding site for Mg(2+).

Belongs to the tubulin family. As to quaternary structure, dimer of alpha and beta chains. A typical microtubule is a hollow water-filled tube with an outer diameter of 25 nm and an inner diameter of 15 nM. Alpha-beta heterodimers associate head-to-tail to form protofilaments running lengthwise along the microtubule wall with the beta-tubulin subunit facing the microtubule plus end conferring a structural polarity. Microtubules usually have 13 protofilaments but different protofilament numbers can be found in some organisms and specialized cells. Mg(2+) serves as cofactor. Expressed primarily in touch receptor neurons.

The protein resides in the cytoplasm. It is found in the cytoskeleton. Functionally, TTubulin is the major constituent of microtubules, a cylinder consisting of laterally associated linear protofilaments composed of alpha- and beta-tubulin heterodimers. Microtubules grow by the addition of GTP-tubulin dimers to the microtubule end, where a stabilizing cap forms. Below the cap, tubulin dimers are in GDP-bound state, owing to GTPase activity of alpha-tubulin. Plays a role in mechanosensory transduction (touch sensitivity). Its function is as follows. Mec-7 beta-tubulin is required for the production of 15-protofilament microtubules. This Caenorhabditis elegans protein is Tubulin beta-1 chain (mec-7).